The chain runs to 197 residues: GTP cyclohydrolase-2 (197 aa).

Position 49–53 (R49–E53) interacts with GTP. Residues C54, C65, and C67 each contribute to the Zn(2+) site. Residues Q70, E92 to R94, and T114 each bind GTP. Catalysis depends on D126, which acts as the Proton acceptor. Catalysis depends on R128, which acts as the Nucleophile. 2 residues coordinate GTP: T149 and K154.

The protein belongs to the GTP cyclohydrolase II family. Homodimer. Zn(2+) is required as a cofactor.

It carries out the reaction GTP + 4 H2O = 2,5-diamino-6-hydroxy-4-(5-phosphoribosylamino)-pyrimidine + formate + 2 phosphate + 3 H(+). Its pathway is cofactor biosynthesis; riboflavin biosynthesis; 5-amino-6-(D-ribitylamino)uracil from GTP: step 1/4. Its function is as follows. Catalyzes the conversion of GTP to 2,5-diamino-6-ribosylamino-4(3H)-pyrimidinone 5'-phosphate (DARP), formate and pyrophosphate. This Pectobacterium atrosepticum (strain SCRI 1043 / ATCC BAA-672) (Erwinia carotovora subsp. atroseptica) protein is GTP cyclohydrolase-2.